Consider the following 291-residue polypeptide: MTVPDNDPEQLRCVAESLATEAAAFVRCRRAEVFGTDLGAAGGGAVRAKSTPTDPVTVVDTETERLLRDRLAQLRPGDSILGEEGGGPADLTATPADTVTWVLDPIDGTVNFVYGIPAYAVSVAAQVDGVSVAGAVAEVVAGRVHSAASGLGAHVTDEYGVQVLRCSAVDDLSMALLGTGFAYSVVRRAAQAALLAQMLPVVRDVRRIGSAALDLCMVAAGQLDAYYEHEVQVWDCAAGALIAAEAGACVQLPKRNGPVGGAGLVVAAAPGIADALLAALQRFNGLAPILD.

Residues E83, D104, I106, and D107 each contribute to the Mg(2+) site. Substrate is bound at residue E83. Substrate contacts are provided by residues 106 to 109, R206, and D235; that span reads IDGT. D235 contacts Mg(2+).

It belongs to the inositol monophosphatase superfamily. It depends on Mg(2+) as a cofactor.

The enzyme catalyses a myo-inositol phosphate + H2O = myo-inositol + phosphate. In Mycobacterium leprae (strain TN), this protein is Inositol-1-monophosphatase (suhB).